The chain runs to 149 residues: MSFRFGQHLIKPSVVFLKTELSFALVNRKPVVPGHVLVCPLRPVERFRDMSPEEVADLFQAAQRVGTVVEKHFQGTSLTFSMQDGPEAGQTVKHVHVHILPRKAGDFHRNDSIYDALEKHDREDKDSPALWRSEEEMAAEAAALRVYFQ.

One can recognise an HIT domain in the interval 2 to 109 (SFRFGQHLIK…LPRKAGDFHR (108 aa)). Substrate-binding positions include histidine 8, asparagine 27, glutamine 83, and 89–92 (GQTV). Residues 94–98 (HVHVH) carry the Histidine triad motif motif. Catalysis depends on histidine 96, which acts as the Tele-AMP-histidine intermediate. Substrate is bound at residue histidine 98. Phosphotyrosine is present on residues tyrosine 114 and tyrosine 147.

As to quaternary structure, homodimer. Interacts with UBE2I. Interacts with MDM2. Interacts with CTNNB1. Identified in a complex with CTNNB1 and LEF1. In terms of processing, phosphorylation at Tyr-114 by SRC is required for induction of apoptosis. As to expression, expressed in the brain, kidney, spleen, testis and lung.

The protein localises to the cytoplasm. The protein resides in the nucleus. It localises to the mitochondrion. It carries out the reaction P(1),P(3)-bis(5'-adenosyl) triphosphate + H2O = AMP + ADP + 2 H(+). The catalysed reaction is adenosine 5'-phosphosulfate + H2O = sulfate + AMP + 2 H(+). It catalyses the reaction adenosine 5'-phosphosulfate + NH4(+) = adenosine 5'-phosphoramidate + sulfate + 2 H(+). The enzyme catalyses adenosine 5'-phosphoramidate + H2O = AMP + NH4(+). In terms of biological role, possesses dinucleoside triphosphate hydrolase activity. Cleaves P(1)-P(3)-bis(5'-adenosyl) triphosphate (Ap3A) to yield AMP and ADP. Can also hydrolyze P(1)-P(4)-bis(5'-adenosyl) tetraphosphate (Ap4A), but has extremely low activity with ATP. Exhibits adenylylsulfatase activity, hydrolyzing adenosine 5'-phosphosulfate to yield AMP and sulfate. Exhibits adenosine 5'-monophosphoramidase activity, hydrolyzing purine nucleotide phosphoramidates with a single phosphate group such as adenosine 5'monophosphoramidate (AMP-NH2) to yield AMP and NH2. Exhibits adenylylsulfate-ammonia adenylyltransferase, catalyzing the ammonolysis of adenosine 5'-phosphosulfate resulting in the formation of adenosine 5'-phosphoramidate. Also catalyzes the ammonolysis of adenosine 5-phosphorofluoridate and diadenosine triphosphate. Modulates transcriptional activation by CTNNB1 and thereby contributes to regulate the expression of genes essential for cell proliferation and survival, such as CCND1 and BIRC5. Plays a role in the induction of apoptosis via SRC and AKT1 signaling pathways. Inhibits MDM2-mediated proteasomal degradation of p53/TP53 and thereby plays a role in p53/TP53-mediated apoptosis. Induction of apoptosis depends on the ability of FHIT to bind P(1)-P(3)-bis(5'-adenosyl) triphosphate or related compounds, but does not require its catalytic activity Functions as a tumor suppressor. The sequence is that of Bis(5'-adenosyl)-triphosphatase (FHIT) from Bos taurus (Bovine).